Consider the following 409-residue polypeptide: MTSLIRSERVAAGLLLLAAVVGLVVANTPAGPGLLAWADGHLALPAIGVDLSLRHWVSDGLLVVFFFIVAVELKHEFLAGGLNSVSRALVPAIAAVGGVVVPALVYLAITAGSGLERGWPVPTATDIAFALGVLAVFGRGLPAAVRVFLLALAVLDDLIAIGIIAVFFTTGLDLGALAIAVAGVVLFAVVGRLGVGRTGAARIAVVALLVLVALVTWWATLSSGIHATIAGVALGFALPRLSGLRAAHALEPASNGIVLPLFAFSAALVAIPAIGLAELAPAFWGIALALPLGKLVGITAGGLLGAWVARRRGSAGGLAVPDLVTVSLLGGIGFTVSLLMSELAFAGLDDVRDEGTLAVLLGSGVAIVAAAVTLSIRSRRARRAGAAADDDDATRDDFPAHADGGPARA.

A run of 12 helical transmembrane segments spans residues 10–30 (VAAG…NTPA), 60–80 (GLLV…FLAG), 89–109 (LVPA…YLAI), 118–138 (GWPV…AVFG), 148–168 (FLLA…AVFF), 171–191 (GLDL…AVVG), 203–223 (IAVV…TLSS), 224–244 (GIHA…LSGL), 257–277 (IVLP…IGLA), 283–303 (FWGI…AGGL), 328–348 (LLGG…FAGL), and 356–376 (TLAV…TLSI). A disordered region spans residues 384–409 (AGAAADDDDATRDDFPAHADGGPARA).

It belongs to the NhaA Na(+)/H(+) (TC 2.A.33) antiporter family.

The protein localises to the cell membrane. It catalyses the reaction Na(+)(in) + 2 H(+)(out) = Na(+)(out) + 2 H(+)(in). In terms of biological role, na(+)/H(+) antiporter that extrudes sodium in exchange for external protons. This is Na(+)/H(+) antiporter NhaA 2 from Clavibacter michiganensis subsp. michiganensis (strain NCPPB 382).